Here is a 960-residue protein sequence, read N- to C-terminus: MTETGSSLMSDKTPDPSVAAFKEQQDRYRDTVFLPRTGFPMRGGLPKREPETLARWAATGLDEKIREAGKGRPVFTLHDGPPYANGHIHIGHALNKVMKDVINRAHRMSGYEVRYLPGWDCHGLPIEWRIEEQYRKAGKDKDQVPLLQFRAECRQYAAQWVQKQAEDFKRIGVQAEWANRYVTMDFSSEAKIVDEIGKFLLNGSLYRGLRPVMWSPVEKTALAEAEIEYHDIDSTTIFVAFPIIKDPTPAHALNGVSAVIWTTTPWTIPANRALAYGPDITYVVLRVDETNENSVVPQGAKLLVAEDRVDAFCTETGITAHHILYTLPGNGLEGAVCAHPLRGRGYEYDVPMLPGDFVTTDAGTGLVHMAPSHGQDDFMLCRQYGIEVPELVQDDGRYAPWVPHLAGIHVFKAADPVCDLLTEARQSAEHDDAPATGLMARGTVRHSYPHSWRSKAPIIFRATPQWFIAMDGETKLREKSLSALDNVTFVPEAARRRLTSMIEQRPDWCISRQRAWGVPIAVFVEKRTGEVLRDAAVMQRIVEAFREKGADIWYEADPSLFLGEGRNPADYEQVFDIVDVWFESGSTHRFDLGQEGLNFPADLYLEGSDQHRGWFQSSLLESVGTMGVAPYKALVTNGFVMDEQGRKMSKSLGNVVAPSDVTESLGADILRLWVLNSDTNEDLRIGQDILKQQGELYRRLRNTLRWLLGALDGFTPEEAVSYADLPPLEQYILHRLTELRGLIASAVETHQWVGVYPALHGFCTTDLSAFYFDIRKDAIYCDAPSDPTRRAARTVLDALHRALCTWLAPVLVFTAEEAWQARFGEDDSVHLAQFFEPEAEWNDPELGNRWEDIRAYRRLITTELETARRDGTIGSSLEASVTLPLSQEEAGIFGGLDWAELLITSHAETELLPGDTAHGGPQVERAPGHKCARCWKVLPEVGENTEHPALCRRCIDVVSA.

Positions 82–92 (PYANGHIHIGH) match the 'HIGH' region motif. Residue E606 coordinates L-isoleucyl-5'-AMP. The 'KMSKS' region motif lies at 647 to 651 (KMSKS). K650 contacts ATP. 4 residues coordinate Zn(2+): C931, C934, C951, and C954.

It belongs to the class-I aminoacyl-tRNA synthetase family. IleS type 1 subfamily. As to quaternary structure, monomer. Requires Zn(2+) as cofactor.

The protein localises to the cytoplasm. It carries out the reaction tRNA(Ile) + L-isoleucine + ATP = L-isoleucyl-tRNA(Ile) + AMP + diphosphate. Catalyzes the attachment of isoleucine to tRNA(Ile). As IleRS can inadvertently accommodate and process structurally similar amino acids such as valine, to avoid such errors it has two additional distinct tRNA(Ile)-dependent editing activities. One activity is designated as 'pretransfer' editing and involves the hydrolysis of activated Val-AMP. The other activity is designated 'posttransfer' editing and involves deacylation of mischarged Val-tRNA(Ile). This Gluconobacter oxydans (strain 621H) (Gluconobacter suboxydans) protein is Isoleucine--tRNA ligase.